The following is a 715-amino-acid chain: Probable serine/threonine-protein kinase mkcE (715 aa).

Disordered stretches follow at residues 1-125 (MQKI…SQHQ), 228-330 (QLQQ…TTTT), and 366-385 (GVDN…PIQP). The segment covering 42–53 (YDGGGSGSGSGG) has biased composition (gly residues). Low complexity-rich tracts occupy residues 54–70 (SSSN…TGGN) and 80–125 (SPSN…SQHQ). The stretch at 207–241 (TGKKNFQQQQLQQLQQQQQQQQLQQQQHQQHNHQI) forms a coiled coil. Over residues 367 to 378 (VDNLSSTTTSLS) the composition is skewed to low complexity. One can recognise a Protein kinase domain in the interval 427–683 (RIGENAEVKG…PTQLLQHPFI (257 aa)). ATP-binding positions include 433–441 (EVKGAFGTV) and Lys-459. The Proton acceptor role is filled by Asp-550.

The protein belongs to the protein kinase superfamily. STE Ser/Thr protein kinase family. STE20 subfamily. Requires Mg(2+) as cofactor.

The enzyme catalyses L-seryl-[protein] + ATP = O-phospho-L-seryl-[protein] + ADP + H(+). The catalysed reaction is L-threonyl-[protein] + ATP = O-phospho-L-threonyl-[protein] + ADP + H(+). The protein is Probable serine/threonine-protein kinase mkcE of Dictyostelium discoideum (Social amoeba).